Consider the following 302-residue polypeptide: Lipoyl synthase (302 aa).

7 residues coordinate [4Fe-4S] cluster: Cys54, Cys59, Cys65, Cys80, Cys84, Cys87, and Ser291. The 215-residue stretch at 66-280 (WSRKTATYML…RIYGKSIGFK (215 aa)) folds into the Radical SAM core domain.

Belongs to the radical SAM superfamily. Lipoyl synthase family. Requires [4Fe-4S] cluster as cofactor.

It is found in the cytoplasm. It carries out the reaction [[Fe-S] cluster scaffold protein carrying a second [4Fe-4S](2+) cluster] + N(6)-octanoyl-L-lysyl-[protein] + 2 oxidized [2Fe-2S]-[ferredoxin] + 2 S-adenosyl-L-methionine + 4 H(+) = [[Fe-S] cluster scaffold protein] + N(6)-[(R)-dihydrolipoyl]-L-lysyl-[protein] + 4 Fe(3+) + 2 hydrogen sulfide + 2 5'-deoxyadenosine + 2 L-methionine + 2 reduced [2Fe-2S]-[ferredoxin]. It participates in protein modification; protein lipoylation via endogenous pathway; protein N(6)-(lipoyl)lysine from octanoyl-[acyl-carrier-protein]: step 2/2. Functionally, catalyzes the radical-mediated insertion of two sulfur atoms into the C-6 and C-8 positions of the octanoyl moiety bound to the lipoyl domains of lipoate-dependent enzymes, thereby converting the octanoylated domains into lipoylated derivatives. In Leptospira borgpetersenii serovar Hardjo-bovis (strain JB197), this protein is Lipoyl synthase.